Here is a 130-residue protein sequence, read N- to C-terminus: Small ribosomal subunit protein uS8 (130 aa).

The protein belongs to the universal ribosomal protein uS8 family. As to quaternary structure, part of the 30S ribosomal subunit. Contacts proteins S5 and S12.

Functionally, one of the primary rRNA binding proteins, it binds directly to 16S rRNA central domain where it helps coordinate assembly of the platform of the 30S subunit. The protein is Small ribosomal subunit protein uS8 of Cytophaga hutchinsonii (strain ATCC 33406 / DSM 1761 / CIP 103989 / NBRC 15051 / NCIMB 9469 / D465).